The sequence spans 1499 residues: Phospholipid-transporting ATPase VA (1499 aa).

The segment at 1-53 (MEREPAGTEEPGPPGRRRRREGRTRTVRSNLLPPPGAEDPAAGAAKGERRRRR) is disordered. Topologically, residues 1–86 (MEREPAGTEE…KNLFEQFHRP (86 aa)) are cytoplasmic. A compositionally biased stretch (basic residues) spans 15–26 (GRRRRREGRTRT). Residues 87 to 106 (ANVYFVFIALLNFVPAVNAF) traverse the membrane as a helical segment. Residues 107-110 (QPGL) lie on the Exoplasmic loop side of the membrane. Residues 111–128 (ALAPVLFILAITAFRDLW) form a helical membrane-spanning segment. Topologically, residues 129–309 (EDYSRHRSDH…SKLERQMNCD (181 aa)) are cytoplasmic. A helical transmembrane segment spans residues 310–332 (VLWCVLLLVCMSLFSAVGHGLWI). Over 333–362 (WRYQEKKSLFYVPKSDGSSLSPVTAAVYSF) the chain is Exoplasmic loop. The helical transmembrane segment at 363-384 (LTMIIVLQVLIPISLYVSIEIV) threads the bilayer. Over 385-1087 (KACQVYFINQ…GHWCYSRLAN (703 aa)) the chain is Cytoplasmic. The active-site 4-aspartylphosphate intermediate is the Asp427. Positions 427, 428, and 429 each coordinate ATP. Asp427 lines the Mg(2+) pocket. Thr429 is a Mg(2+) binding site. The tract at residues 464 to 531 (ADSEEEEVVP…AFSSPMEKDI (68 aa)) is disordered. Ser466 is modified (phosphoserine). Positions 477-499 (SVSQRGSIGSHQSVRVVHRTQST) are enriched in polar residues. ATP contacts are provided by Glu700, Phe742, Lys766, Arg809, Thr889, Gly890, Asp891, Arg1005, and Lys1011. Mg(2+) is bound at residue Asp1031. ATP contacts are provided by Asn1034 and Asp1035. Asp1035 is a binding site for Mg(2+). The helical transmembrane segment at 1088 to 1108 (MVLYFFYKNTMFVGLLFWFQF) threads the bilayer. The Exoplasmic loop segment spans residues 1109 to 1119 (FCGFSASTMID). A helical membrane pass occupies residues 1120 to 1140 (QWYLIFFNLLFSSLPPLVTGV). At 1141-1170 (LDRDVPANVLLTNPQLYKSGQNMEEYRPRT) the chain is on the cytoplasmic side. The helical transmembrane segment at 1171–1192 (FWFNMADAAFQSLVCFSIPYLA) threads the bilayer. The Exoplasmic loop segment spans residues 1193 to 1199 (YYDSNVD). The chain crosses the membrane as a helical span at residues 1200-1222 (LFTWGTPIVTIALLTFLLHLGIE). Residues 1223–1228 (TKTWTW) are Cytoplasmic-facing. The helical transmembrane segment at 1229-1249 (LNWITCGFSVLLFFTVALIYN) threads the bilayer. Residues 1250 to 1267 (ASCATCYPPSNPYWTMQA) are Exoplasmic loop-facing. The chain crosses the membrane as a helical span at residues 1268–1292 (LLGDPVFYLTCLMTPVAALLPRLFF). The Cytoplasmic portion of the chain corresponds to 1293–1499 (RSLQGRVFPT…LIGASSRRSQ (207 aa)). 2 disordered regions span residues 1311 to 1356 (TRKS…PSWH) and 1464 to 1499 (DGQA…RRSQ). Over residues 1330-1340 (LPKDSGTEHSS) the composition is skewed to basic and acidic residues. Residues 1341–1356 (GRTVKTSVPLSQPSWH) show a composition bias toward polar residues.

The protein belongs to the cation transport ATPase (P-type) (TC 3.A.3) family. Type IV subfamily. In terms of assembly, component of a P4-ATPase flippase complex which consists of a catalytic alpha subunit ATP10A and an accessory beta subunit TMEM30A. Mg(2+) is required as a cofactor. In terms of processing, autophosphorylated at the conserved aspartate of the P-type ATPase signature sequence. In terms of tissue distribution, widely expressed, with highest levels in kidney, followed by lung, brain, prostate, testis, ovary and small intestine.

The protein localises to the cell membrane. It localises to the endoplasmic reticulum membrane. The enzyme catalyses ATP + H2O + phospholipidSide 1 = ADP + phosphate + phospholipidSide 2.. It carries out the reaction a 1,2-diacyl-sn-glycero-3-phosphocholine(out) + ATP + H2O = a 1,2-diacyl-sn-glycero-3-phosphocholine(in) + ADP + phosphate + H(+). The catalysed reaction is a beta-D-glucosyl-(1&lt;-&gt;1')-N-acylsphing-4-enine(out) + ATP + H2O = a beta-D-glucosyl-(1&lt;-&gt;1')-N-acylsphing-4-enine(in) + ADP + phosphate + H(+). Its activity is regulated as follows. Inhibited under hypotonic conditions. In terms of biological role, catalytic component of P4-ATPase flippase complex, which catalyzes the hydrolysis of ATP coupled to the transport of phosphatidylcholine (PC) from the outer to the inner leaflet of the plasma membrane. Initiates inward plasma membrane bending and recruitment of Bin/amphiphysin/Rvs (BAR) domain-containing proteins involved in membrane tubulation and cell trafficking. Facilitates ITGB1/beta1 integrin endocytosis, delaying cell adhesion and cell spreading on extracellular matrix. Has low flippase activity toward glucosylceramide (GlcCer). This chain is Phospholipid-transporting ATPase VA, found in Homo sapiens (Human).